The following is a 952-amino-acid chain: Leucine--tRNA ligase (952 aa).

A 'HIGH' region motif is present at residues 48-58 (PYLNGVLHAGH). Positions 644 to 648 (KLSKS) match the 'KMSKS' region motif. Lys-647 serves as a coordination point for ATP.

It belongs to the class-I aminoacyl-tRNA synthetase family.

Its subcellular location is the cytoplasm. It catalyses the reaction tRNA(Leu) + L-leucine + ATP = L-leucyl-tRNA(Leu) + AMP + diphosphate. This Methanococcus vannielii (strain ATCC 35089 / DSM 1224 / JCM 13029 / OCM 148 / SB) protein is Leucine--tRNA ligase.